A 460-amino-acid polypeptide reads, in one-letter code: MEAICSSLEPLFPCREAAIETLGELIGDSSETYPSAIYLFGHSGTGKTALTRAFLKECGKRQNVRTAHLNAIECYTTKIMLEILLDSLAPDQGDALKVDNMLDFVEQLRRQAATRVEDQGFLIAVDNAERLRDMDANVLPVLLRLQELTNLNLCVILLSQLPFEKFYNKTGLSEIVCLHLAQYNKAETQRILGSDFQQVRNQLLEQFAQDKKRLEICQEAVTEDFYNNYLNLFLSVFYKACRDVPELQLTARKCLSTYLEPVLDGTVDATDISRLWRHIAGPLRSALTQIYMRIEKPAEEVEDFTAIEDQSVRKLAQSLELPYYAKFLLIAAFLASHNAAKQDKRLFVKHHGKQRKRMQTVNARAKTTEKMSTTLGPKSFSIDRLLAIFYAILEEKVGLTCNLLSQISTLVHLNLLSFVSGEQNIMEGSARLQCTIGLEFVLQIGKVVGFNVRQYLCDFM.

ATP is bound at residue 41–48; it reads GHSGTGKT.

Belongs to the ORC5 family. As to quaternary structure, ORC is composed of six subunits.

Its subcellular location is the nucleus. Functionally, component of the origin recognition complex (ORC) that binds origins of replication. DNA-binding is ATP-dependent, however specific DNA sequences that define origins of replication have not been identified so far. ORC is required to assemble the pre-replication complex necessary to initiate DNA replication. The protein is Origin recognition complex subunit 5 (Orc5) of Drosophila melanogaster (Fruit fly).